We begin with the raw amino-acid sequence, 509 residues long: ATP synthase subunit alpha (509 aa).

Position 169–176 (169–176) interacts with ATP; sequence GDRQTGKT.

This sequence belongs to the ATPase alpha/beta chains family. In terms of assembly, F-type ATPases have 2 components, CF(1) - the catalytic core - and CF(0) - the membrane proton channel. CF(1) has five subunits: alpha(3), beta(3), gamma(1), delta(1), epsilon(1). CF(0) has three main subunits: a(1), b(2) and c(9-12). The alpha and beta chains form an alternating ring which encloses part of the gamma chain. CF(1) is attached to CF(0) by a central stalk formed by the gamma and epsilon chains, while a peripheral stalk is formed by the delta and b chains.

Its subcellular location is the cell inner membrane. The enzyme catalyses ATP + H2O + 4 H(+)(in) = ADP + phosphate + 5 H(+)(out). Its function is as follows. Produces ATP from ADP in the presence of a proton gradient across the membrane. The alpha chain is a regulatory subunit. The sequence is that of ATP synthase subunit alpha from Methylobacterium nodulans (strain LMG 21967 / CNCM I-2342 / ORS 2060).